The primary structure comprises 660 residues: Bifunctional polymyxin resistance protein ArnA (660 aa).

A formyltransferase ArnAFT region spans residues 1–304 (MKAVIFAYHD…TLGLVAGARL (304 aa)). His-104 (proton donor; for formyltransferase activity) is an active-site residue. (6R)-10-formyltetrahydrofolate is bound by residues Arg-114 and 136–140 (VKRAD). The interval 314–660 (RRIRVLILGV…RSVDIAERAS (347 aa)) is dehydrogenase ArnADH. NAD(+)-binding positions include Asp-347 and 368-369 (DI). UDP-alpha-D-glucuronate is bound by residues Ala-393, Tyr-398, and 432–433 (TS). Glu-434 (proton acceptor; for decarboxylase activity) is an active-site residue. UDP-alpha-D-glucuronate-binding positions include Arg-460, Asn-492, 526–535 (KLIDGGQQKR), and Tyr-613. Arg-619 (proton donor; for decarboxylase activity) is an active-site residue.

It in the N-terminal section; belongs to the Fmt family. UDP-L-Ara4N formyltransferase subfamily. In the C-terminal section; belongs to the NAD(P)-dependent epimerase/dehydratase family. UDP-glucuronic acid decarboxylase subfamily. Homohexamer, formed by a dimer of trimers.

It catalyses the reaction UDP-alpha-D-glucuronate + NAD(+) = UDP-beta-L-threo-pentopyranos-4-ulose + CO2 + NADH. The enzyme catalyses UDP-4-amino-4-deoxy-beta-L-arabinose + (6R)-10-formyltetrahydrofolate = UDP-4-deoxy-4-formamido-beta-L-arabinose + (6S)-5,6,7,8-tetrahydrofolate + H(+). Its pathway is nucleotide-sugar biosynthesis; UDP-4-deoxy-4-formamido-beta-L-arabinose biosynthesis; UDP-4-deoxy-4-formamido-beta-L-arabinose from UDP-alpha-D-glucuronate: step 1/3. It participates in nucleotide-sugar biosynthesis; UDP-4-deoxy-4-formamido-beta-L-arabinose biosynthesis; UDP-4-deoxy-4-formamido-beta-L-arabinose from UDP-alpha-D-glucuronate: step 3/3. It functions in the pathway bacterial outer membrane biogenesis; lipopolysaccharide biosynthesis. Bifunctional enzyme that catalyzes the oxidative decarboxylation of UDP-glucuronic acid (UDP-GlcUA) to UDP-4-keto-arabinose (UDP-Ara4O) and the addition of a formyl group to UDP-4-amino-4-deoxy-L-arabinose (UDP-L-Ara4N) to form UDP-L-4-formamido-arabinose (UDP-L-Ara4FN). The modified arabinose is attached to lipid A and is required for resistance to polymyxin and cationic antimicrobial peptides. This is Bifunctional polymyxin resistance protein ArnA (arnA) from Salmonella typhimurium (strain LT2 / SGSC1412 / ATCC 700720).